A 256-amino-acid polypeptide reads, in one-letter code: NH(3)-dependent NAD(+) synthetase (256 aa).

Residue 29–36 coordinates ATP; it reads GISGGIDS. D35 contributes to the Mg(2+) binding site. R115 contacts deamido-NAD(+). Residue T135 coordinates ATP. E140 contributes to the Mg(2+) binding site. Deamido-NAD(+) is bound by residues K148 and D155. Positions 164 and 186 each coordinate ATP. 245–246 is a deamido-NAD(+) binding site; sequence HK.

The protein belongs to the NAD synthetase family. Homodimer.

The enzyme catalyses deamido-NAD(+) + NH4(+) + ATP = AMP + diphosphate + NAD(+) + H(+). It participates in cofactor biosynthesis; NAD(+) biosynthesis; NAD(+) from deamido-NAD(+) (ammonia route): step 1/1. Its function is as follows. Catalyzes the ATP-dependent amidation of deamido-NAD to form NAD. Uses ammonia as a nitrogen source. The polypeptide is NH(3)-dependent NAD(+) synthetase (Methanosarcina acetivorans (strain ATCC 35395 / DSM 2834 / JCM 12185 / C2A)).